The chain runs to 219 residues: Thiamine-phosphate synthase (219 aa).

4-amino-2-methyl-5-(diphosphooxymethyl)pyrimidine is bound by residues 48-52 (QFRQK) and asparagine 84. Positions 85 and 104 each coordinate Mg(2+). Serine 123 provides a ligand contact to 4-amino-2-methyl-5-(diphosphooxymethyl)pyrimidine. 150 to 152 (TQS) serves as a coordination point for 2-[(2R,5Z)-2-carboxy-4-methylthiazol-5(2H)-ylidene]ethyl phosphate. 4-amino-2-methyl-5-(diphosphooxymethyl)pyrimidine is bound at residue lysine 153. Residues glycine 181 and 199–200 (IS) contribute to the 2-[(2R,5Z)-2-carboxy-4-methylthiazol-5(2H)-ylidene]ethyl phosphate site.

It belongs to the thiamine-phosphate synthase family. Mg(2+) serves as cofactor.

It carries out the reaction 2-[(2R,5Z)-2-carboxy-4-methylthiazol-5(2H)-ylidene]ethyl phosphate + 4-amino-2-methyl-5-(diphosphooxymethyl)pyrimidine + 2 H(+) = thiamine phosphate + CO2 + diphosphate. The catalysed reaction is 2-(2-carboxy-4-methylthiazol-5-yl)ethyl phosphate + 4-amino-2-methyl-5-(diphosphooxymethyl)pyrimidine + 2 H(+) = thiamine phosphate + CO2 + diphosphate. The enzyme catalyses 4-methyl-5-(2-phosphooxyethyl)-thiazole + 4-amino-2-methyl-5-(diphosphooxymethyl)pyrimidine + H(+) = thiamine phosphate + diphosphate. Its pathway is cofactor biosynthesis; thiamine diphosphate biosynthesis; thiamine phosphate from 4-amino-2-methyl-5-diphosphomethylpyrimidine and 4-methyl-5-(2-phosphoethyl)-thiazole: step 1/1. Condenses 4-methyl-5-(beta-hydroxyethyl)thiazole monophosphate (THZ-P) and 2-methyl-4-amino-5-hydroxymethyl pyrimidine pyrophosphate (HMP-PP) to form thiamine monophosphate (TMP). This Helicobacter pylori (strain Shi470) protein is Thiamine-phosphate synthase.